We begin with the raw amino-acid sequence, 204 residues long: 3-isopropylmalate dehydratase small subunit (204 aa).

Belongs to the LeuD family. LeuD type 1 subfamily. In terms of assembly, heterodimer of LeuC and LeuD.

The enzyme catalyses (2R,3S)-3-isopropylmalate = (2S)-2-isopropylmalate. The protein operates within amino-acid biosynthesis; L-leucine biosynthesis; L-leucine from 3-methyl-2-oxobutanoate: step 2/4. Functionally, catalyzes the isomerization between 2-isopropylmalate and 3-isopropylmalate, via the formation of 2-isopropylmaleate. This chain is 3-isopropylmalate dehydratase small subunit, found in Roseiflexus castenholzii (strain DSM 13941 / HLO8).